The sequence spans 232 residues: Ribonuclease P protein component 3 (232 aa).

This sequence belongs to the eukaryotic/archaeal RNase P protein component 3 family. In terms of assembly, consists of a catalytic RNA component and at least 5 protein subunits.

Its subcellular location is the cytoplasm. It catalyses the reaction Endonucleolytic cleavage of RNA, removing 5'-extranucleotides from tRNA precursor.. In terms of biological role, part of ribonuclease P, a protein complex that generates mature tRNA molecules by cleaving their 5'-ends. In Methanococcus maripaludis (strain DSM 14266 / JCM 13030 / NBRC 101832 / S2 / LL), this protein is Ribonuclease P protein component 3.